We begin with the raw amino-acid sequence, 232 residues long: MRKAVVVFSGGQDSTTCLIQAIKNYDEVHCITFDYGQRHKLEIEVAQSITKELGITAHKVMDVGLLNELAISSLTRDNIEVSHELQANGLPNSFVPGRNILFLTLSGIYAYQIGAEAVITGVCETDFSGYPDCRDEFVKSLNQSLVLGMDRALKIETPLMWLNKAETWALADQYKQLDFVREKTLTCYNGIIGDGCGNCPSCDLRRAGLEDYLTNKDAIMADLVAKQAEGQA.

8-18 (FSGGQDSTTCL) serves as a coordination point for ATP. Residues cysteine 187, cysteine 196, cysteine 199, and cysteine 202 each contribute to the Zn(2+) site.

This sequence belongs to the QueC family. The cofactor is Zn(2+).

The catalysed reaction is 7-carboxy-7-deazaguanine + NH4(+) + ATP = 7-cyano-7-deazaguanine + ADP + phosphate + H2O + H(+). Its pathway is purine metabolism; 7-cyano-7-deazaguanine biosynthesis. Its function is as follows. Catalyzes the ATP-dependent conversion of 7-carboxy-7-deazaguanine (CDG) to 7-cyano-7-deazaguanine (preQ(0)). The sequence is that of 7-cyano-7-deazaguanine synthase from Photobacterium profundum (strain SS9).